Consider the following 1438-residue polypeptide: DNA polymerase III PolC-type (1438 aa).

One can recognise an Exonuclease domain in the interval 422–578 (YVVFDVETTG…YDTEATAYIF (157 aa)).

Belongs to the DNA polymerase type-C family. PolC subfamily.

The protein resides in the cytoplasm. The enzyme catalyses DNA(n) + a 2'-deoxyribonucleoside 5'-triphosphate = DNA(n+1) + diphosphate. Its function is as follows. Required for replicative DNA synthesis. This DNA polymerase also exhibits 3' to 5' exonuclease activity. In Staphylococcus epidermidis (strain ATCC 35984 / DSM 28319 / BCRC 17069 / CCUG 31568 / BM 3577 / RP62A), this protein is DNA polymerase III PolC-type.